The following is a 245-amino-acid chain: Endonuclease III (245 aa).

The HhH domain occupies 119-138 (MDKLVTLPGVGRKTANVILG). The [4Fe-4S] cluster site is built by cysteine 198, cysteine 205, cysteine 208, and cysteine 214.

It belongs to the Nth/MutY family. [4Fe-4S] cluster serves as cofactor.

The catalysed reaction is 2'-deoxyribonucleotide-(2'-deoxyribose 5'-phosphate)-2'-deoxyribonucleotide-DNA = a 3'-end 2'-deoxyribonucleotide-(2,3-dehydro-2,3-deoxyribose 5'-phosphate)-DNA + a 5'-end 5'-phospho-2'-deoxyribonucleoside-DNA + H(+). Functionally, DNA repair enzyme that has both DNA N-glycosylase activity and AP-lyase activity. The DNA N-glycosylase activity releases various damaged pyrimidines from DNA by cleaving the N-glycosidic bond, leaving an AP (apurinic/apyrimidinic) site. The AP-lyase activity cleaves the phosphodiester bond 3' to the AP site by a beta-elimination, leaving a 3'-terminal unsaturated sugar and a product with a terminal 5'-phosphate. Has a preference for oxidized pyrimidines, such as thymine glycol (prefers 5S isomers) 5,6-dihydrouracil:G, 5-hydroxyuracil:G, 5-hydroxycytosine:G and urea:A. Cleaves ssDNA containing an AP site. This Mycobacterium tuberculosis (strain ATCC 25618 / H37Rv) protein is Endonuclease III.